The chain runs to 722 residues: Probable carboxypeptidase X1 (722 aa).

Positions 1-20 are cleaved as a signal peptide; the sequence is MWGLLLAVTAFAPSVGLGLG. A disordered region spans residues 30 to 54; the sequence is APGSTLAPHSSVAQPSTKANETSER. A compositionally biased stretch (polar residues) spans 36–49; it reads APHSSVAQPSTKAN. N-linked (GlcNAc...) asparagine glycans are attached at residues asparagine 49, asparagine 200, asparagine 210, and asparagine 307. In terms of domain architecture, F5/8 type C spans 103-263; the sequence is PGCPPLGLES…PCLRAEILAC (161 aa). Cysteine 105 and cysteine 263 are oxidised to a cystine. Residues 287-610 form the Peptidase M14 domain; that stretch reads RHHNYKAMRK…DALLTYLEQV (324 aa). The Zn(2+) site is built by histidine 349 and glutamate 352. Asparagine 461 carries N-linked (GlcNAc...) asparagine glycosylation. Histidine 487 lines the Zn(2+) pocket. The Proton donor/acceptor role is filled by glutamate 580.

Belongs to the peptidase M14 family. Requires Zn(2+) as cofactor. In terms of tissue distribution, strongly expressed in testis and spleen. Moderately expressed in salivary gland, brain, heart, lung, and kidney. Extremely low expression in liver and muscle. No expression in eye, adrenal, and white adipose tissues.

Its subcellular location is the secreted. Its function is as follows. May be involved in cell-cell interactions. No carboxypeptidase activity was found yet. In Mus musculus (Mouse), this protein is Probable carboxypeptidase X1 (Cpxm1).